The sequence spans 219 residues: 7-cyano-7-deazaguanine synthase (219 aa).

10-20 (FSGGQDSTTCL) provides a ligand contact to ATP. The Zn(2+) site is built by cysteine 188, cysteine 197, cysteine 200, and cysteine 203.

This sequence belongs to the QueC family. As to quaternary structure, homodimer. Zn(2+) serves as cofactor.

The enzyme catalyses 7-carboxy-7-deazaguanine + NH4(+) + ATP = 7-cyano-7-deazaguanine + ADP + phosphate + H2O + H(+). Its pathway is purine metabolism; 7-cyano-7-deazaguanine biosynthesis. In terms of biological role, catalyzes the ATP-dependent conversion of 7-carboxy-7-deazaguanine (CDG) to 7-cyano-7-deazaguanine (preQ(0)). This Clostridium botulinum (strain Kyoto / Type A2) protein is 7-cyano-7-deazaguanine synthase.